Consider the following 1298-residue polypeptide: Phosphoribosylformylglycinamidine synthase (1298 aa).

Residues 303–327 form a disordered region; it reads FPGAATGSGGEIRDEGATGRGAKPK. Residues 305–316, 384–386, and Ala-676 contribute to the ATP site; these read GAATGSGGEIRD and TGY. Positions 677, 716, 720, and 884 each coordinate Mg(2+). Ser-886 serves as a coordination point for ATP. A Glutamine amidotransferase type-1 domain is found at 1045–1298; that stretch reads VAVLREQGVN…MFRNARAWVN (254 aa). Cys-1138 (nucleophile) is an active-site residue. Active-site residues include His-1263 and Glu-1265.

The protein in the N-terminal section; belongs to the FGAMS family. In terms of assembly, monomer.

Its subcellular location is the cytoplasm. The enzyme catalyses N(2)-formyl-N(1)-(5-phospho-beta-D-ribosyl)glycinamide + L-glutamine + ATP + H2O = 2-formamido-N(1)-(5-O-phospho-beta-D-ribosyl)acetamidine + L-glutamate + ADP + phosphate + H(+). It participates in purine metabolism; IMP biosynthesis via de novo pathway; 5-amino-1-(5-phospho-D-ribosyl)imidazole from N(2)-formyl-N(1)-(5-phospho-D-ribosyl)glycinamide: step 1/2. Its function is as follows. Phosphoribosylformylglycinamidine synthase involved in the purines biosynthetic pathway. Catalyzes the ATP-dependent conversion of formylglycinamide ribonucleotide (FGAR) and glutamine to yield formylglycinamidine ribonucleotide (FGAM) and glutamate. In Pseudomonas syringae pv. tomato (strain ATCC BAA-871 / DC3000), this protein is Phosphoribosylformylglycinamidine synthase.